The chain runs to 471 residues: Putative multidrug resistance protein MdtD (471 aa).

At 1 to 11 (MTDLPDSTRWQ) the chain is on the periplasmic side. Residues 12 to 32 (LWIVAFGFFMQSLDTTIVNTA) traverse the membrane as a helical segment. Over 33–48 (LPSMAQSLGESPLHMH) the chain is Cytoplasmic. A helical membrane pass occupies residues 49 to 69 (MVIVSYVLTVAVMLPASGWLA). Residues 70–76 (DKVGVRN) lie on the Periplasmic side of the membrane. Residues 77–97 (IFFTAIVLFTLGSLFCALSGT) traverse the membrane as a helical segment. Residues 98–101 (LNEL) lie on the Cytoplasmic side of the membrane. A helical transmembrane segment spans residues 102 to 124 (LLARALQGVGGAMMVPVGRLTVM). Residues 125–137 (KIVPREQYMAAMT) are Periplasmic-facing. Residues 138–158 (FVTLPGQVGPLLGPALGGLLV) form a helical membrane-spanning segment. Residues 159–164 (EYASWH) lie on the Cytoplasmic side of the membrane. Residues 165-185 (WIFLINIPVGIIGAIATLMLM) traverse the membrane as a helical segment. The Periplasmic segment spans residues 186 to 196 (PNYTMQTRRFD). Residues 197–217 (LSGFLLLAVGMAVLTLALDGS) form a helical membrane-spanning segment. The Cytoplasmic portion of the chain corresponds to 218–224 (KGTGLSP). Residues 225 to 245 (LAIAGLVAVGVVALVLYLLHA) form a helical membrane-spanning segment. Topologically, residues 246–262 (RNNNRALFSLKLFRTRT) are periplasmic. Residues 263-283 (FSLGLAGSFAGRIGSGMLPFM) form a helical membrane-spanning segment. Over 284–285 (TP) the chain is Cytoplasmic. The chain crosses the membrane as a helical span at residues 286–306 (VFLQIGLGFSPFHAGLMMIPM). Topologically, residues 307-341 (VLGSMGMKRIVVQVVNRFGYRRVLVATTLGLSLVT) are periplasmic. The helical transmembrane segment at 342–362 (MLFMTTALLGWYYVLPFVLFL) threads the bilayer. The Cytoplasmic portion of the chain corresponds to 363-395 (QGMVNSTRFSSMNTLTLKDLPDNLASSGNSLLS). Residues 396 to 416 (MIMQLSMSIGVTIAGLLLGLF) traverse the membrane as a helical segment. Topologically, residues 417 to 430 (GSQHVSVDSGTTQT) are periplasmic. The helical transmembrane segment at 431–451 (VFMYTWLSMAFIIALPAFIFA) threads the bilayer. Residues 452 to 471 (RVPNDTHQNVAISRRKRSAQ) lie on the Cytoplasmic side of the membrane.

Belongs to the major facilitator superfamily. TCR/Tet family.

Its subcellular location is the cell inner membrane. This chain is Putative multidrug resistance protein MdtD, found in Escherichia coli O7:K1 (strain IAI39 / ExPEC).